Reading from the N-terminus, the 914-residue chain is Beta-mannosidase A (914 aa).

An N-terminal signal peptide occupies residues 1–20 (MRFTATAAALVASSIPATLG). N-linked (GlcNAc...) asparagine glycosylation is found at Asn39, Asn79, Asn230, Asn265, Asn299, Asn309, and Asn330. Glu462 acts as the Proton donor in catalysis. Asn591, Asn614, Asn641, Asn721, Asn744, Asn773, Asn784, and Asn909 each carry an N-linked (GlcNAc...) asparagine glycan.

This sequence belongs to the glycosyl hydrolase 2 family. Beta-mannosidase A subfamily. Homodimer.

It localises to the secreted. It carries out the reaction Hydrolysis of terminal, non-reducing beta-D-mannose residues in beta-D-mannosides.. It participates in glycan metabolism; N-glycan degradation. Exoglycosidase that cleaves the single beta-linked mannose residue from the non-reducing end of beta-mannosidic oligosaccharides of various complexity and length. Involved in the degradation of polymeric mannan and galactomannan. The polypeptide is Beta-mannosidase A (mndA) (Aspergillus flavus (strain ATCC 200026 / FGSC A1120 / IAM 13836 / NRRL 3357 / JCM 12722 / SRRC 167)).